Reading from the N-terminus, the 90-residue chain is uncharacterized protein (90 aa).

The helical transmembrane segment at histidine 15–threonine 34 threads the bilayer. The tract at residues threonine 34–aspartate 65 is disordered. The segment covering lysine 43–aspartate 60 has biased composition (polar residues). An N-linked (GlcNAc...) asparagine glycan is attached at asparagine 44.

The protein localises to the mitochondrion membrane. This is an uncharacterized protein from Saccharomyces cerevisiae (strain ATCC 204508 / S288c) (Baker's yeast).